Consider the following 446-residue polypeptide: Fatty acid desaturase 2 (446 aa).

At 1 to 132 the chain is on the cytoplasmic side; it reads MGMGGQSGEG…EDMRLFKSNP (132 aa). The region spanning 20–97 is the Cytochrome b5 heme-binding domain; the sequence is EAQYSWEEIQ…LKPLYIGELA (78 aa). A helical transmembrane segment spans residues 133-153; that stretch reads AFFIFYLFHILLIEFLAWCTL. A topological domain (lumenal) is located at residue histidine 154. The chain crosses the membrane as a helical span at residues 155-175; the sequence is YLGTGWIPAIITVLLLTISQA. Residues 176–265 are Cytoplasmic-facing; that stretch reads QAGWLQHDFG…IKYLPYNHQH (90 aa). A Histidine box-1 motif is present at residues 182-186; the sequence is HDFGH. The Histidine box-2 motif lies at 219 to 223; that stretch reads HFQHH. The helical transmembrane segment at 266-286 threads the bilayer; that stretch reads LYFFLIGPPLLIPVYFTVQII. Topologically, residues 287–307 are lumenal; the sequence is KTMIARKDWVDLAWSVSYYVR. Residues 308–328 form a helical membrane-spanning segment; it reads FFFTFVPFFGVLGSLALLNAV. Residues 329-446 lie on the Cytoplasmic side of the membrane; it reads RFFESHWFVW…QLWLDAYLHK (118 aa). A Histidine box-3 motif is present at residues 384–388; sequence QIEHH.

This sequence belongs to the fatty acid desaturase type 1 family.

It is found in the endoplasmic reticulum membrane. It participates in lipid metabolism; polyunsaturated fatty acid biosynthesis. In terms of biological role, component of a lipid metabolic pathway that catalyzes biosynthesis of highly unsaturated fatty acids (HUFA) from precursor essential polyunsaturated fatty acids (PUFA) linoleic acid (LA) (18:2n-6) and alpha-linolenic acid (ALA) (18:3n-3). Catalyzes the first and rate limiting step in this pathway which is the desaturation of LA (18:2n-6) and ALA (18:3n-3) into gamma-linoleic acid (GLA) (18:3n-6) and stearidonic acid (18:4n-3) respectively and other desaturation steps. Highly unsaturated fatty acids (HUFA) play pivotal roles in many biological functions. The polypeptide is Fatty acid desaturase 2 (fads2) (Xenopus laevis (African clawed frog)).